A 5142-amino-acid polypeptide reads, in one-letter code: Protein piccolo (5142 aa).

Residues 1-21 are compositionally biased toward low complexity; the sequence is MGNEASLEGEGLPEGLAAAAA. Disordered regions lie at residues 1 to 154 and 177 to 583; these read MGNE…SMMP and DLIS…PSQG. 3 stretches are compositionally biased toward basic and acidic residues: residues 114-125, 136-150, and 188-202; these read RTTDTFRSEQKL, KESK…EHKS, and ETTK…EQGK. Residues 232 to 244 are compositionally biased toward polar residues; that stretch reads QDGTPKSISSQQP. Composition is skewed to pro residues over residues 298–317 and 352–371; these read LPSP…PPAQ and PVQP…PAKP. Over residues 376–385 the composition is skewed to polar residues; that stretch reads TGSEKPSSEQ. Residues 397 to 555 form a 10 X 10 AA tandem approximate repeats of P-A-K-P-Q-P-Q-Q-P-X region; that stretch reads VGKTPAQQPG…PAKPSAQQST (159 aa). Pro residues predominate over residues 467–493; it reads TKPPSQLPGPAKPPPQQPGPAKPPPQQ. The span at 494–506 shows a compositional bias: low complexity; sequence PGSAKPPSQQPGS. Pro residues predominate over residues 507–522; the sequence is TKPPPQQPGPAKPSPQ. Positions 523–554 are enriched in low complexity; sequence QPGSTKPPSQQPGSAKPSAQQPSPAKPSAQQS. The segment at 589-613 adopts a C4-type zinc-finger fold; the sequence is CPLCNTTELLLHVPEKANFNTCTEC. Disordered regions lie at residues 650–929 and 945–1058; these read LAPV…TVTG and LIST…PEST. The segment covering 673–683 has biased composition (low complexity); sequence SKSSPQPQQTS. 2 stretches are compositionally biased toward basic and acidic residues: residues 684-702 and 743-755; these read PKKD…EPKK and EQDK…DKPK. Residues 765-774 show a composition bias toward polar residues; that stretch reads DLVSSSSATT. Residues 841-857 are compositionally biased toward basic and acidic residues; the sequence is KGQKQVDPVQKKEEPKK. Residues 873 to 882 show a composition bias toward pro residues; sequence KGSPTPPGPR. Over residues 889–927 the composition is skewed to polar residues; sequence VPTPQQSPKPQEQSRRFSLNLGSITDAPKSQPTTPQETV. 2 positions are modified to phosphoserine: Ser906 and Ser918. Thr922 is modified (phosphothreonine). A compositionally biased stretch (low complexity) spans 949–969; sequence AGQPGPHSQSGPGAPMKQAPA. Basic and acidic residues-rich tracts occupy residues 996–1012 and 1019–1034; these read VKKE…EPKA and KRTE…KDSK. The C4-type zinc-finger motif lies at 1059-1082; the sequence is CPLCKTELNIGSKDPPNFNTCTEC. 4 disordered regions span residues 1120–1163, 1183–1386, 1391–1410, and 1423–1868; these read GDIR…QEQE, EKIP…TDEK, GLKK…SDLA, and QAST…SDPE. Residues 1126–1139 are compositionally biased toward pro residues; that stretch reads PPAPSGPKASPMPV. Composition is skewed to basic and acidic residues over residues 1193–1265, 1307–1318, and 1330–1347; these read QKQE…HDLL, PKEDDKTTKTIK, and DQVE…DKSD. Over residues 1348 to 1358 the composition is skewed to low complexity; the sequence is TSSSQQPKSPQ. A phosphoserine mark is found at Ser1356, Ser1366, Ser1367, Ser1396, Ser1398, Ser1401, Ser1402, and Ser1405. Positions 1359 to 1374 are enriched in polar residues; it reads GLSDTGYSSDGISSSL. Low complexity predominate over residues 1398–1407; it reads SQESSPSSPS. Composition is skewed to basic and acidic residues over residues 1428–1451 and 1469–1510; these read ADEK…DQEK and KESQ…REPY. 8 positions are modified to phosphoserine: Ser1516, Ser1517, Ser1519, Ser1522, Ser1546, Ser1549, Ser1570, and Ser1572. The segment covering 1564-1576 has biased composition (acidic residues); the sequence is SADEDASGSEDDE. The residue at position 1617 (Thr1617) is a Phosphothreonine. 3 positions are modified to phosphoserine: Ser1618, Ser1628, and Ser1640. Over residues 1631-1640 the composition is skewed to acidic residues; it reads DEDDEAFDES. Residues 1641 to 1652 show a composition bias toward basic and acidic residues; it reads PELKYRETKSQE. Polar residues predominate over residues 1671–1689; sequence ELNSTIADKYSAESSQKKT. Residues 1693–1703 show a composition bias toward acidic residues; it reads FDEEPELEMES. Position 1703 is a phosphoserine (Ser1703). Thr1705 bears the Phosphothreonine mark. Phosphoserine occurs at positions 1707 and 1712. Over residues 1715-1732 the composition is skewed to polar residues; it reads EGSSSLHASSFTPGTSPT. The span at 1772 to 1785 shows a compositional bias: acidic residues; the sequence is DSSEEEELREEEEL. 2 positions are modified to phosphoserine: Ser1773 and Ser1774. Residues 1786–1799 are compositionally biased toward basic and acidic residues; sequence LKEQEKQREIEQQQ. Thr1825 is modified (phosphothreonine). Ser1831 carries the post-translational modification Phosphoserine. Residues 1840-1855 are compositionally biased toward basic and acidic residues; the sequence is EELRQAAEMEELHRSS. 4 positions are modified to phosphoserine: Ser1860, Ser1865, Ser1873, and Ser1894. Disordered regions lie at residues 2169–2192, 2365–2438, and 2504–2536; these read PSES…SSVC, ETFG…PTIL, and EPSK…PTGL. Composition is skewed to low complexity over residues 2174–2192 and 2374–2387; these read TSVP…SSVC and SQLP…SSLP. Pro residues-rich tracts occupy residues 2404-2433 and 2506-2517; these read QPPP…PTSP and SKPPIAPKPVIP. Ser2562 is subject to Phosphoserine. Residue Thr3069 is modified to Phosphothreonine. Disordered regions lie at residues 3407 to 3508 and 3558 to 3626; these read EKQP…DKTK and KTYK…LYSP. Residues 3432-3441 show a composition bias toward basic and acidic residues; that stretch reads DDPRSFKKIV. At Ser3443 the chain carries Phosphoserine. Phosphothreonine occurs at positions 3447 and 3474. Residues 3474–3483 show a composition bias toward acidic residues; the sequence is TDDEDQDEWD. Residues 3574–3585 are compositionally biased toward polar residues; it reads DTQSPQYLSATS. Residues Ser3577, Ser3585, Ser3615, Ser3619, Ser3625, Ser3628, Ser3631, Ser3652, Ser3678, Ser3680, and Ser3686 each carry the phosphoserine modification. Disordered regions lie at residues 3652–3746 and 3833–3908; these read SPQK…MGTV and YMSD…QQSH. 2 stretches are compositionally biased toward polar residues: residues 3701 to 3716 and 3733 to 3745; these read EGYT…SSGA and STGT…TMGT. Ser3835 is subject to Phosphoserine. Over residues 3845-3857 the composition is skewed to basic and acidic residues; the sequence is TRIESQHGIERPR. Positions 3859–3908 are enriched in polar residues; the sequence is APQTEFSQFIPPQTQTESQLVPPTSPYTQYQYSSPALPTQAPTSYTQQSH. 2 positions are modified to phosphoserine: Ser4088 and Ser4204. Residues 4278-4301 form a disordered region; that stretch reads EADKPYSSGSRSRPSSRPSSVYGL. Residues 4282–4301 are compositionally biased toward low complexity; that stretch reads PYSSGSRSRPSSRPSSVYGL. Ser4358, Ser4362, Ser4365, Ser4394, and Ser4430 each carry phosphoserine. The interval 4389–4411 is disordered; it reads RDQFGSSHSLPEVQQHMREESRT. The 95-residue stretch at 4496 to 4590 folds into the PDZ domain; sequence RIKITRDSKD…EAEICVRLDL (95 aa). Disordered stretches follow at residues 4597 to 4618 and 4645 to 4690; these read ENSQ…KSPG and EKGS…TKVV. The segment covering 4598 to 4615 has biased composition (basic and acidic residues); sequence NSQHLELHEPPKAVDKAK. The span at 4652–4673 shows a compositional bias: low complexity; the sequence is SGPTSAGSSSVPSPGQPGSPSV. Ser4664 carries the phosphoserine modification. The region spanning 4694–4823 is the C2 1 domain; the sequence is ITGEIQLQIN…SHLDNTPRWY (130 aa). Ca(2+) contacts are provided by Asp4723 and Asp4729. A Phosphoserine modification is found at Ser4778. Asp4793, Asp4795, Ser4798, and Asp4801 together coordinate Ca(2+). 2 disordered regions span residues 4830 to 4907 and 4930 to 4986; these read ESID…VTQT and PTKP…QNGQ. 2 stretches are compositionally biased toward low complexity: residues 4838-4853 and 4877-4887; these read HSSQ…SVIK and SSPGSSKSSSE. The span at 4895-4907 shows a compositional bias: polar residues; it reads PSRSQSKTSVTQT. Positions 4941–4965 are enriched in low complexity; it reads SSVSTGSSGSSFGSGYSVDSEGSSS. The region spanning 5007 to 5132 is the C2 2 domain; that stretch reads VMGEIKIALK…DLRKRIVNWH (126 aa).

Interacts with BSN, ERC2/CAST1, RIMS1 and UNC13A. Interacts (via C-terminus) with TRIO (via N-terminus). Interacts with CTBP1. Interacts with SIAH1; this interaction negatively regulates SIAH1 E3 ligase activity. Directly interacts with GIT1 and GIT2. Ca(2+) serves as cofactor. As to expression, moderately expressed in the developing cerebral cortex.

The protein localises to the presynaptic active zone. In terms of biological role, scaffold protein of the presynaptic cytomatrix at the active zone (CAZ) which is the place in the synapse where neurotransmitter is released. After synthesis, participates in the formation of Golgi-derived membranous organelles termed Piccolo-Bassoon transport vesicles (PTVs) that are transported along axons to sites of nascent synaptic contacts. At the presynaptic active zone, regulates the spatial organization of synaptic vesicle cluster, the protein complexes that execute membrane fusion and compensatory endocytosis. Organizes as well the readily releasable pool of synaptic vesicles and safeguards a fraction of them to be not immediately available for action potential-induced release. Also functions in processes other than assembly such as the regulation of specific presynaptic protein ubiquitination by interacting with SIAH1 or the regulation of presynaptic autophagy. Also mediates synapse to nucleus communication leading to reconfiguration of gene expression by associating with the transcriptional corepressor CTBP1 and by subsequently reducing the size of its pool available for nuclear import. This is Protein piccolo from Homo sapiens (Human).